Here is a 564-residue protein sequence, read N- to C-terminus: Proline--tRNA ligase (564 aa).

Belongs to the class-II aminoacyl-tRNA synthetase family. ProS type 1 subfamily. In terms of assembly, homodimer.

Its subcellular location is the cytoplasm. It carries out the reaction tRNA(Pro) + L-proline + ATP = L-prolyl-tRNA(Pro) + AMP + diphosphate. Catalyzes the attachment of proline to tRNA(Pro) in a two-step reaction: proline is first activated by ATP to form Pro-AMP and then transferred to the acceptor end of tRNA(Pro). As ProRS can inadvertently accommodate and process non-cognate amino acids such as alanine and cysteine, to avoid such errors it has two additional distinct editing activities against alanine. One activity is designated as 'pretransfer' editing and involves the tRNA(Pro)-independent hydrolysis of activated Ala-AMP. The other activity is designated 'posttransfer' editing and involves deacylation of mischarged Ala-tRNA(Pro). The misacylated Cys-tRNA(Pro) is not edited by ProRS. The chain is Proline--tRNA ligase from Bacillus velezensis (strain DSM 23117 / BGSC 10A6 / LMG 26770 / FZB42) (Bacillus amyloliquefaciens subsp. plantarum).